Consider the following 408-residue polypeptide: Mitochondrial outer membrane protein SLC25A46 (408 aa).

Disordered stretches follow at residues 1–23 and 52–80; these read MHPR…EEPC and HWGE…LGAG. Residues 66–76 show a composition bias toward low complexity; it reads LGAAGLNEEPG. One copy of the Solcar 1 repeat lies at 86–177; it reads QLNRFAGFGI…GIISEFTPLP (92 aa). 6 helical membrane passes run 93-113, 157-177, 189-209, 248-268, 304-324, and 373-393; these read FGIG…CIVL, FIVQ…TPLP, IGGH…FYSA, LLPL…HYVI, FPEL…LYPL, and LGFY…VAVL. The stretch at 301–403 is one Solcar 2 repeat; sequence DAYFPELIAS…QLTKIIYSTL (103 aa).

Belongs to the mitochondrial carrier (TC 2.A.29) family.

Its subcellular location is the mitochondrion outer membrane. Its function is as follows. Transmembrane protein of the mitochondrial outer membrane that controls mitochondrial organization. May regulate the assembly of the MICOS (mitochondrial contact site and cristae organizing system) complex which is essential to the biogenesis and dynamics of mitochondrial cristae, the inwards folds of the inner mitochondrial membrane. Through its interaction with the EMC (endoplasmic reticulum membrane protein complex), could regulate mitochondrial lipid homeostasis and thereby mitochondrial fission. The sequence is that of Mitochondrial outer membrane protein SLC25A46 from Gallus gallus (Chicken).